The following is a 568-amino-acid chain: 2-succinyl-5-enolpyruvyl-6-hydroxy-3-cyclohexene-1-carboxylate synthase (568 aa).

Belongs to the TPP enzyme family. MenD subfamily. Homodimer. Requires Mg(2+) as cofactor. It depends on Mn(2+) as a cofactor. Thiamine diphosphate serves as cofactor.

It carries out the reaction isochorismate + 2-oxoglutarate + H(+) = 5-enolpyruvoyl-6-hydroxy-2-succinyl-cyclohex-3-ene-1-carboxylate + CO2. The protein operates within quinol/quinone metabolism; 1,4-dihydroxy-2-naphthoate biosynthesis; 1,4-dihydroxy-2-naphthoate from chorismate: step 2/7. Its pathway is quinol/quinone metabolism; menaquinone biosynthesis. Functionally, catalyzes the thiamine diphosphate-dependent decarboxylation of 2-oxoglutarate and the subsequent addition of the resulting succinic semialdehyde-thiamine pyrophosphate anion to isochorismate to yield 2-succinyl-5-enolpyruvyl-6-hydroxy-3-cyclohexene-1-carboxylate (SEPHCHC). The sequence is that of 2-succinyl-5-enolpyruvyl-6-hydroxy-3-cyclohexene-1-carboxylate synthase from Mannheimia succiniciproducens (strain KCTC 0769BP / MBEL55E).